The chain runs to 89 residues: Small ribosomal subunit protein bS16 (89 aa).

This sequence belongs to the bacterial ribosomal protein bS16 family.

The protein is Small ribosomal subunit protein bS16 of Desulforamulus reducens (strain ATCC BAA-1160 / DSM 100696 / MI-1) (Desulfotomaculum reducens).